Reading from the N-terminus, the 203-residue chain is Small ribosomal subunit protein uS4 (203 aa).

One can recognise an S4 RNA-binding domain in the interval 93–153 (QRLDSVVYRL…EKSKNILPIQ (61 aa)).

This sequence belongs to the universal ribosomal protein uS4 family. Part of the 30S ribosomal subunit. Contacts protein S5. The interaction surface between S4 and S5 is involved in control of translational fidelity.

In terms of biological role, one of the primary rRNA binding proteins, it binds directly to 16S rRNA where it nucleates assembly of the body of the 30S subunit. Its function is as follows. With S5 and S12 plays an important role in translational accuracy. The chain is Small ribosomal subunit protein uS4 from Leuconostoc mesenteroides subsp. mesenteroides (strain ATCC 8293 / DSM 20343 / BCRC 11652 / CCM 1803 / JCM 6124 / NCDO 523 / NBRC 100496 / NCIMB 8023 / NCTC 12954 / NRRL B-1118 / 37Y).